Consider the following 210-residue polypeptide: N-(5'-phosphoribosyl)anthranilate isomerase (210 aa).

This sequence belongs to the TrpF family.

It catalyses the reaction N-(5-phospho-beta-D-ribosyl)anthranilate = 1-(2-carboxyphenylamino)-1-deoxy-D-ribulose 5-phosphate. It functions in the pathway amino-acid biosynthesis; L-tryptophan biosynthesis; L-tryptophan from chorismate: step 3/5. This is N-(5'-phosphoribosyl)anthranilate isomerase from Staphylococcus aureus (strain Mu3 / ATCC 700698).